Here is a 106-residue protein sequence, read N- to C-terminus: Large ribosomal subunit protein bL21 (106 aa).

This sequence belongs to the bacterial ribosomal protein bL21 family. Part of the 50S ribosomal subunit. Contacts protein L20.

Functionally, this protein binds to 23S rRNA in the presence of protein L20. This Xanthomonas campestris pv. campestris (strain ATCC 33913 / DSM 3586 / NCPPB 528 / LMG 568 / P 25) protein is Large ribosomal subunit protein bL21.